Consider the following 529-residue polypeptide: Type I restriction enzyme EcoKI methylase subunit (529 aa).

S-adenosyl-L-methionine contacts are provided by residues Q148–R153, T178–G180, and E216.

Belongs to the N(4)/N(6)-methyltransferase family. As to quaternary structure, the type I restriction/modification system is composed of three polypeptides R, M and S. The restriction enzyme has stoichiometry R(2)M(2)S(1). The methyltransferase is composed of M(2)S(1). (Microbial infection) Interacts with Escherichia phage T7 protein Ocr; this interaction leads to the inhibition of the methyltransferase restriction enzyme M.EcoKI composed of M(2)S(1).

The catalysed reaction is a 2'-deoxyadenosine in DNA + S-adenosyl-L-methionine = an N(6)-methyl-2'-deoxyadenosine in DNA + S-adenosyl-L-homocysteine + H(+). In terms of biological role, the subtype gamma methyltransferase (M) subunit of a type I restriction enzyme. The M and S subunits together form a methyltransferase (MTase) that methylates A-2 on the top and A-3 on the bottom strand of the sequence 5'-AACN(6)GTGC-3'. In the presence of the R subunit the complex can also act as an endonuclease, binding to the same target sequence but cutting the DNA some distance from this site. Whether the DNA is cut or modified depends on the methylation state of the target sequence. When the target site is unmodified, the DNA is cut. When the target site is hemimethylated, the complex acts as a maintenance MTase modifying the DNA so that both strands become methylated. After locating a non-methylated recognition site, the enzyme complex serves as a molecular motor that translocates DNA in an ATP-dependent manner until a collision occurs that triggers cleavage. This chain is Type I restriction enzyme EcoKI methylase subunit, found in Escherichia coli (strain K12).